Consider the following 97-residue polypeptide: MNLRPLHDRVIVKRLDQETKTASGIVIPDAAAEKPDQGEVLAIGPGKRDDKGALIALDVKVGDRVLFGKYAGQTVKVDGQELLVMREEDIMAVVNAK.

The protein belongs to the GroES chaperonin family. As to quaternary structure, heptamer of 7 subunits arranged in a ring. Interacts with the chaperonin GroEL.

It localises to the cytoplasm. Its function is as follows. Together with the chaperonin GroEL, plays an essential role in assisting protein folding. The GroEL-GroES system forms a nano-cage that allows encapsulation of the non-native substrate proteins and provides a physical environment optimized to promote and accelerate protein folding. GroES binds to the apical surface of the GroEL ring, thereby capping the opening of the GroEL channel. This is Co-chaperonin GroES from Burkholderia vietnamiensis.